The primary structure comprises 761 residues: Protein PHTF1 (761 aa).

The region spanning 6 to 150 is the PHTF domain; that stretch reads RDAISWYQKK…VHCQIVSTQI (145 aa). A run of 3 helical transmembrane segments spans residues 77–97, 99–119, and 121–141; these read GLVR…VTSL, IFVW…LYLL, and PIVS…MGTV. The segment at 152–184 is disordered; that stretch reads RPSGNNGNRRRRKLRKTVNGDGSRDNGNNSPDK. The segment covering 170–181 has biased composition (low complexity); sequence NGDGSRDNGNNS. N-linked (GlcNAc...) asparagine glycans are attached at residues N179 and N224. Phosphoserine is present on residues S272, S276, S277, S333, and S335. A disordered region spans residues 345-414; that stretch reads VFSQGSRSGM…NTIHSGTKRD (70 aa). Residues 347 to 363 show a composition bias toward low complexity; sequence SQGSRSGMSGGSRSLNL. N362 carries N-linked (GlcNAc...) asparagine glycosylation. Residues 364-375 are compositionally biased toward basic and acidic residues; sequence SRRDSESTRHDS. N430 carries N-linked (GlcNAc...) asparagine glycosylation. A run of 4 helical transmembrane segments spans residues 472 to 492, 514 to 534, 610 to 630, and 644 to 664; these read GVGY…FPFL, TLFC…INFI, VVVS…CAQV, and WEFL…ASLG. Residues N673 and N732 are each glycosylated (N-linked (GlcNAc...) asparagine). Residues 736 to 756 form a helical membrane-spanning segment; that stretch reads VVILSAVSGVISDLLGFNIRL.

As to quaternary structure, interacts with FEM1B. As to expression, widely expressed with highest levels in testis.

It localises to the endoplasmic reticulum membrane. The protein resides in the golgi apparatus. It is found in the cis-Golgi network membrane. The protein is Protein PHTF1 of Mus musculus (Mouse).